A 332-amino-acid chain; its full sequence is MDTRSEVLLRQAELFQGSLLLAGLAADDLLGRLPNARGWSWHAGDQAALEARFPGRSHFGVDAPAQSFDSAVLFLPKSKDLTDYLLNALASRLAGRELYLVGEKRSGVESAAKQLNPFGKPRKLDSARHCQLWQVTVANAPEPLTLQSLAQEYELPLAEGPLKVISLPGVFSHGRLDRGTALLLEHLDHLPAGHLLDFGCGAGVLGATVKRRYPDSRVTLLDVDAFAAASSRLTLAANGLEAEVLTGDGIDAAPMGLNGILTNPPFHTGVHTDYQATENLLRKAAKHLQKGGELRVVANSFLRYQPLIEEHLGPCAIKAEGQGFRIYRAKRG.

The protein belongs to the methyltransferase superfamily. RsmC family. As to quaternary structure, monomer.

The protein resides in the cytoplasm. The enzyme catalyses guanosine(1207) in 16S rRNA + S-adenosyl-L-methionine = N(2)-methylguanosine(1207) in 16S rRNA + S-adenosyl-L-homocysteine + H(+). Its function is as follows. Specifically methylates the guanine in position 1207 of 16S rRNA in the 30S particle. The protein is Ribosomal RNA small subunit methyltransferase C of Pseudomonas fluorescens (strain ATCC BAA-477 / NRRL B-23932 / Pf-5).